The sequence spans 364 residues: Dihydroorotate dehydrogenase (quinone) (364 aa).

FMN contacts are provided by residues 61–65 (AGFDK) and Ser85. Lys65 is a binding site for substrate. 110 to 114 (NRMGF) serves as a coordination point for substrate. Residues Asn139 and Asn170 each contribute to the FMN site. Residue Asn170 coordinates substrate. The active-site Nucleophile is Ser173. Asn175 contacts substrate. Residues Lys214 and Ser242 each coordinate FMN. 243 to 244 (NT) contributes to the substrate binding site. FMN is bound by residues Gly266, Gly295, and 316–317 (YS).

It belongs to the dihydroorotate dehydrogenase family. Type 2 subfamily. As to quaternary structure, monomer. It depends on FMN as a cofactor.

Its subcellular location is the cell membrane. It carries out the reaction (S)-dihydroorotate + a quinone = orotate + a quinol. Its pathway is pyrimidine metabolism; UMP biosynthesis via de novo pathway; orotate from (S)-dihydroorotate (quinone route): step 1/1. Its function is as follows. Catalyzes the conversion of dihydroorotate to orotate with quinone as electron acceptor. This chain is Dihydroorotate dehydrogenase (quinone), found in Bradyrhizobium sp. (strain ORS 278).